Reading from the N-terminus, the 466-residue chain is Ribulose bisphosphate carboxylase large chain (466 aa).

Lysine 4 carries the post-translational modification N6,N6,N6-trimethyllysine. Residues asparagine 113 and threonine 163 each contribute to the substrate site. The Proton acceptor role is filled by lysine 165. Lysine 167 is a substrate binding site. Residues lysine 191, aspartate 193, and glutamate 194 each coordinate Mg(2+). Residue lysine 191 is modified to N6-carboxylysine. The active-site Proton acceptor is the histidine 284. Residues arginine 285, histidine 317, and serine 369 each contribute to the substrate site.

Belongs to the RuBisCO large chain family. Type I subfamily. Heterohexadecamer of 8 large chains and 8 small chains; disulfide-linked. The disulfide link is formed within the large subunit homodimers. Mg(2+) is required as a cofactor. The disulfide bond which can form in the large chain dimeric partners within the hexadecamer appears to be associated with oxidative stress and protein turnover.

The protein localises to the plastid. Its subcellular location is the chloroplast. It carries out the reaction 2 (2R)-3-phosphoglycerate + 2 H(+) = D-ribulose 1,5-bisphosphate + CO2 + H2O. The enzyme catalyses D-ribulose 1,5-bisphosphate + O2 = 2-phosphoglycolate + (2R)-3-phosphoglycerate + 2 H(+). RuBisCO catalyzes two reactions: the carboxylation of D-ribulose 1,5-bisphosphate, the primary event in carbon dioxide fixation, as well as the oxidative fragmentation of the pentose substrate in the photorespiration process. Both reactions occur simultaneously and in competition at the same active site. The chain is Ribulose bisphosphate carboxylase large chain from Aphelandra sinclairiana (Orange shrimp plant).